The sequence spans 278 residues: HCLS1-associated protein X-1 (278 aa).

Residue serine 2 is modified to N-acetylserine. The tract at residues 2-43 (SVFDLFRGFFGFPGPRSHRDPFFGGMTRDDDDDEDDEEEEDS) is required for localization in mitochondria. Disordered regions lie at residues 15–50 (GPRS…GRES) and 99–262 (LPSH…ALDD). A compositionally biased stretch (acidic residues) spans 30-43 (DDDDDEDDEEEEDS). The interval 113-278 (TPGVRLREGQ…LLLGRWFRSR (166 aa)) is involved in HCLS1 binding. Residues 132–152 (PDSHQPRIFEGVLESHAKPES) are compositionally biased toward basic and acidic residues. The tract at residues 174–205 (VSPHSRAREDKDLDSQVSQEGLGPLLQPQPKS) is involved in CASP9 binding. An involved in GNA13 binding region spans residues 175-246 (SPHSRAREDK…TTVTHQEAHD (72 aa)). The required for localization in sarcoplasmic reticulum stretch occupies residues 182 to 278 (EDKDLDSQVS…LLLGRWFRSR (97 aa)). An involved in PKD2 binding region spans residues 183 to 278 (DKDLDSQVSQ…LLLGRWFRSR (96 aa)). Residues serine 188 and serine 191 each carry the phosphoserine modification. The involved in PLN binding stretch occupies residues 202-224 (QPKSYFKSISVTKITKPDGTVEE). The segment at 202 to 244 (QPKSYFKSISVTKITKPDGTVEEHRTVVDSEGRRETTVTHQEA) is involved in ATP2A2 binding. The interval 209-278 (SISVTKITKP…LLLGRWFRSR (70 aa)) is mediates interaction with UCP3. Residues 216-254 (TKPDGTVEEHRTVVDSEGRRETTVTHQEAHDSSRSDPDP) show a composition bias toward basic and acidic residues. A required for ITGB6 binding region spans residues 269–278 (LLLGRWFRSR).

It belongs to the HAX1 family. In terms of assembly, interacts with ABCB1, ABCB4 and ABCB11. Directly associates with HCLS1/HS1, through binding to its N-terminal region. Interacts with CTTN. Interacts with PKD2. Interacts with GNA13. Interacts with CASP9. Interacts with ITGB6. Interacts with PLN and ATP2A2; these interactions are inhibited by calcium. Interacts with GRB7. Interacts (via C-terminus) with XIAP/BIRC4 (via BIR 2 domain and BIR 3 domain) and this interaction blocks ubiquitination of XIAP/BIRC4. Interacts with TPC2. Interacts with KCNC3. Interacts with XPO1. Interacts with RNF217. Interacts with UCP3; the interaction is direct and calcium-dependent. Interacts with MAPRE2; this interaction regulates cell migration in keratinocytes. In terms of tissue distribution, present in striated muscles (at protein level).

Its subcellular location is the mitochondrion matrix. The protein resides in the endoplasmic reticulum. The protein localises to the nucleus membrane. It is found in the cytoplasmic vesicle. It localises to the cytoplasm. Its subcellular location is the cell cortex. The protein resides in the cell membrane. The protein localises to the sarcoplasmic reticulum. It is found in the P-body. It localises to the nucleus. In terms of biological role, recruits the Arp2/3 complex to the cell cortex and regulates reorganization of the cortical actin cytoskeleton via its interaction with KCNC3 and the Arp2/3 complex. Slows down the rate of inactivation of KCNC3 channels. Promotes GNA13-mediated cell migration. Involved in the clathrin-mediated endocytosis pathway. May be involved in internalization of ABC transporters such as ABCB11. May inhibit CASP9 and CASP3. Promotes cell survival. May regulate intracellular calcium pools. This is HCLS1-associated protein X-1 (Hax1) from Rattus norvegicus (Rat).